A 699-amino-acid chain; its full sequence is Kinesin-like protein KIF3A (699 aa).

Positions Asn14 to Ile345 constitute a Kinesin motor domain. Gly100 to Thr107 lines the ATP pocket. Residues Pro355–Leu590 are a coiled coil. Disordered regions lie at residues Lys372–Glu421 and Ser663–Gln699. The span at Glu376–Glu400 shows a compositional bias: acidic residues. A compositionally biased stretch (basic residues) spans Thr672 to Ser687. The residue at position 687 (Ser687) is a Phosphoserine. The globular stretch occupies residues Leu697–Gln699.

This sequence belongs to the TRAFAC class myosin-kinesin ATPase superfamily. Kinesin family. Kinesin II subfamily. In terms of assembly, heterodimer of KIF3A and KIF3B. Interacts with CIMAP3. Interacts with CLN3. Interacts with DCTN1. Interacts with FLCN. Interacts with AP3B1.

It is found in the cytoplasm. The protein resides in the cytoskeleton. The protein localises to the cell projection. It localises to the cilium. Its subcellular location is the microtubule organizing center. It is found in the centrosome. The protein resides in the centriole. In terms of biological role, microtubule-based anterograde translocator for membranous organelles. Plus end-directed microtubule sliding activity in vitro. Plays a role in primary cilia formation. Plays a role in centriole cohesion and subdistal appendage organization and function. Regulates the formation of the subdistal appendage via recruitment of DCTN1 to the centriole. Also required for ciliary basal feet formation and microtubule anchoring to mother centriole. This chain is Kinesin-like protein KIF3A (KIF3A), found in Homo sapiens (Human).